The sequence spans 163 residues: Halocyanin (163 aa).

The signal sequence occupies residues 1 to 24; that stretch reads MKDISRRRFVLGTGATVAAATLAG. Cysteine 25 is subject to N-acetylcysteine. Cysteine 25 carries the S-archaeol cysteine lipid modification. A compositionally biased stretch (gly residues) spans 26–38; sequence NGNGNGNGNGNGN. Residues 26 to 48 are disordered; sequence NGNGNGNGNGNGNGEPDTPEGRA. The region spanning 48–163 is the Plastocyanin-like domain; it reads ADQFLTDNDA…QGMYGAVIVE (116 aa). 4 residues coordinate Cu cation: histidine 110, cysteine 148, histidine 151, and methionine 156.

It is found in the cell membrane. Functionally, electron donor. Binds one copper ion. This is Halocyanin (hcy) from Natronomonas pharaonis (Natronobacterium pharaonis).